Consider the following 307-residue polypeptide: Exosome complex component RRP45A (307 aa).

This sequence belongs to the RNase PH family. As to expression, expressed in roots, leaves, stems, buds and siliques.

It is found in the cytoplasm. The protein localises to the nucleus. Its function is as follows. Probable 3'-&gt;5' exoribonuclease involved in the regulation of cuticular wax biosynthesis. Can perform exosomal functions and partially complement the yeast rrp45 null mutant. This chain is Exosome complex component RRP45A, found in Arabidopsis thaliana (Mouse-ear cress).